A 284-amino-acid polypeptide reads, in one-letter code: Bifunctional protein FolD 2 (284 aa).

Residues 164–166 (GRG), serine 189, and isoleucine 230 contribute to the NADP(+) site.

It belongs to the tetrahydrofolate dehydrogenase/cyclohydrolase family. Homodimer.

The catalysed reaction is (6R)-5,10-methylene-5,6,7,8-tetrahydrofolate + NADP(+) = (6R)-5,10-methenyltetrahydrofolate + NADPH. The enzyme catalyses (6R)-5,10-methenyltetrahydrofolate + H2O = (6R)-10-formyltetrahydrofolate + H(+). It functions in the pathway one-carbon metabolism; tetrahydrofolate interconversion. Functionally, catalyzes the oxidation of 5,10-methylenetetrahydrofolate to 5,10-methenyltetrahydrofolate and then the hydrolysis of 5,10-methenyltetrahydrofolate to 10-formyltetrahydrofolate. The polypeptide is Bifunctional protein FolD 2 (Desulfitobacterium hafniense (strain Y51)).